The chain runs to 707 residues: Translation initiation factor eIF2B subunit epsilon (707 aa).

Disordered regions lie at residues 489 to 526 and 686 to 707; these read HDDI…SVKF and AEEE…DESD. The 178-residue stretch at 516–693 folds into the W2 domain; sequence DNPIEPDSVK…KSAEEESDDS (178 aa). Acidic residues predominate over residues 688–707; it reads EESDDSDDSDDDDDDSDESD.

It belongs to the eIF-2B gamma/epsilon subunits family. Component of the translation initiation factor 2B (eIF2B) complex which is a heterodecamer of two sets of five different subunits: alpha, beta, gamma, delta and epsilon. Subunits alpha, beta and delta comprise a regulatory subcomplex and subunits epsilon and gamma comprise a catalytic subcomplex. Within the complex, the hexameric regulatory complex resides at the center, with the two heterodimeric catalytic subcomplexes bound on opposite sides.

The protein localises to the cytoplasm. Its subcellular location is the cytosol. Acts as a component of the translation initiation factor 2B (eIF2B) complex, which catalyzes the exchange of GDP for GTP on eukaryotic initiation factor 2 (eIF2) gamma subunit. Its guanine nucleotide exchange factor activity is repressed when bound to eIF2 complex phosphorylated on the alpha subunit, thereby limiting the amount of methionyl-initiator methionine tRNA available to the ribosome and consequently global translation is repressed. This Dictyostelium discoideum (Social amoeba) protein is Translation initiation factor eIF2B subunit epsilon (eif2b5).